The sequence spans 123 residues: Large ribosomal subunit protein bL19 (123 aa).

The protein belongs to the bacterial ribosomal protein bL19 family.

Its function is as follows. This protein is located at the 30S-50S ribosomal subunit interface and may play a role in the structure and function of the aminoacyl-tRNA binding site. This Ureaplasma parvum serovar 3 (strain ATCC 27815 / 27 / NCTC 11736) protein is Large ribosomal subunit protein bL19.